Consider the following 493-residue polypeptide: UDP-N-acetylmuramoyl-L-alanyl-D-glutamate--2,6-diaminopimelate ligase (493 aa).

Residue S31 coordinates UDP-N-acetyl-alpha-D-muramoyl-L-alanyl-D-glutamate. Residue 111 to 117 (GTNGKTT) coordinates ATP. Residues N152, 153-154 (TT), S180, and R188 each bind UDP-N-acetyl-alpha-D-muramoyl-L-alanyl-D-glutamate. K220 is modified (N6-carboxylysine). Meso-2,6-diaminopimelate-binding positions include R386, 410 to 413 (DNPR), G462, and E466. A Meso-diaminopimelate recognition motif motif is present at residues 410–413 (DNPR).

It belongs to the MurCDEF family. MurE subfamily. The cofactor is Mg(2+). Carboxylation is probably crucial for Mg(2+) binding and, consequently, for the gamma-phosphate positioning of ATP.

It localises to the cytoplasm. It catalyses the reaction UDP-N-acetyl-alpha-D-muramoyl-L-alanyl-D-glutamate + meso-2,6-diaminopimelate + ATP = UDP-N-acetyl-alpha-D-muramoyl-L-alanyl-gamma-D-glutamyl-meso-2,6-diaminopimelate + ADP + phosphate + H(+). It participates in cell wall biogenesis; peptidoglycan biosynthesis. In terms of biological role, catalyzes the addition of meso-diaminopimelic acid to the nucleotide precursor UDP-N-acetylmuramoyl-L-alanyl-D-glutamate (UMAG) in the biosynthesis of bacterial cell-wall peptidoglycan. This Oceanobacillus iheyensis (strain DSM 14371 / CIP 107618 / JCM 11309 / KCTC 3954 / HTE831) protein is UDP-N-acetylmuramoyl-L-alanyl-D-glutamate--2,6-diaminopimelate ligase (murE1).